Reading from the N-terminus, the 436-residue chain is GTPase Der (436 aa).

2 EngA-type G domains span residues 4–167 and 176–351; these read PIVA…GEEE and IRLS…ENHK. GTP contacts are provided by residues 10 to 17, 57 to 61, 119 to 122, 182 to 189, 229 to 233, and 294 to 297; these read GRPNVGKS, DTGGI, NKVD, DTAGM, and NKWD. The KH-like domain maps to 352–436; sequence KRVQSSTLNE…PIHIIARKRN (85 aa).

The protein belongs to the TRAFAC class TrmE-Era-EngA-EngB-Septin-like GTPase superfamily. EngA (Der) GTPase family. As to quaternary structure, associates with the 50S ribosomal subunit.

Its function is as follows. GTPase that plays an essential role in the late steps of ribosome biogenesis. The sequence is that of GTPase Der from Staphylococcus aureus (strain Mu3 / ATCC 700698).